Here is a 333-residue protein sequence, read N- to C-terminus: GTPase Obg (333 aa).

An Obg domain is found at 1–159 (MKFIDEATIT…ATVRLELKLL (159 aa)). The interval 63–85 (KQFAAPNGAPGEGRQKTGKSGDD) is disordered. Basic and acidic residues predominate over residues 75–84 (GRQKTGKSGD). Positions 160-329 (ADVGLIGLPN…LKKHLFELLC (170 aa)) constitute an OBG-type G domain. Residues 166–173 (GLPNAGKS), 191–195 (FTTLS), 213–216 (DIPG), 283–286 (NKMD), and 310–312 (SAA) each bind GTP. 2 residues coordinate Mg(2+): Ser173 and Thr193.

It belongs to the TRAFAC class OBG-HflX-like GTPase superfamily. OBG GTPase family. In terms of assembly, monomer. Mg(2+) serves as cofactor.

The protein resides in the cytoplasm. In terms of biological role, an essential GTPase which binds GTP, GDP and possibly (p)ppGpp with moderate affinity, with high nucleotide exchange rates and a fairly low GTP hydrolysis rate. Plays a role in control of the cell cycle, stress response, ribosome biogenesis and in those bacteria that undergo differentiation, in morphogenesis control. The protein is GTPase Obg of Desulfosudis oleivorans (strain DSM 6200 / JCM 39069 / Hxd3) (Desulfococcus oleovorans).